We begin with the raw amino-acid sequence, 887 residues long: Alpha-amylase 3, chloroplastic (887 aa).

A chloroplast-targeting transit peptide spans 1-55 (MSTVPIESLLHHSYLRHNSKVNRGNRSFIPISLNLRSHFTSNKLLHSIGKSVGVS). Cys-499 and Cys-587 are disulfide-bonded. Residues 545 to 546 (YM) and 664 to 669 (RLDFVR) contribute to the substrate site. Asp-666 serves as the catalytic Nucleophile. Residue Glu-691 is the Proton donor of the active site. Residues Trp-693, Ser-695, Gln-712, Lys-754, 760-762 (GWW), His-773, Gln-779, Lys-857, and Trp-884 contribute to the substrate site.

This sequence belongs to the glycosyl hydrolase 13 family. Ca(2+) is required as a cofactor. In terms of tissue distribution, expressed in developing siliques.

It is found in the plastid. It localises to the chloroplast. It carries out the reaction Endohydrolysis of (1-&gt;4)-alpha-D-glucosidic linkages in polysaccharides containing three or more (1-&gt;4)-alpha-linked D-glucose units.. With respect to regulation, redox-regulated, with the highest activity under reducing conditions. The midpoint redox potential is -329 mV. The disulfide bridge between Cys-499 and Cys-587 inhibits catalysis. Inhibited by CuCl(2) and H(2)O(2). In terms of biological role, possesses endoamylolytic activity in vitro, but seems not required for breakdown of transitory starch in leaves. May be involved in the determination of the final structure of glucans by shortening long linear phospho-oligosaccharides in the chloroplast stroma. Can act on both soluble and insoluble glucan substrates to release small linear and branched malto-oligosaccharides. Works synergistically with beta-amylase toward efficient starch degradation. Has activity against p-nitrophenyl maltoheptaoside (BPNP-G7), amylopectin and beta-limit dextrin. Involved in stress-induced starch degradation. This Arabidopsis thaliana (Mouse-ear cress) protein is Alpha-amylase 3, chloroplastic.